The chain runs to 109 residues: UPF0449 protein C19orf25 homolog (109 aa).

A Phosphotyrosine modification is found at Tyr63.

Belongs to the UPF0449 family.

The chain is UPF0449 protein C19orf25 homolog from Rattus norvegicus (Rat).